The following is a 1629-amino-acid chain: Ferredoxin-dependent glutamate synthase 2, chloroplastic (1629 aa).

Residues Met1–Ala107 constitute a chloroplast transit peptide. The active-site For GATase activity is Cys108. A Glutamine amidotransferase type-2 domain is found at Cys108–Glu507. Leu1186–Arg1243 provides a ligand contact to FMN. [3Fe-4S] cluster is bound by residues Cys1239, Cys1245, and Cys1250. Residues Ser1599–Lys1629 are disordered.

This sequence belongs to the glutamate synthase family. [3Fe-4S] cluster is required as a cofactor. FAD serves as cofactor. It depends on FMN as a cofactor. Expressed predominantly in roots and slightly in leaves. Low expression in the leaf mesophyll and phloem companion cell-sieve element complex.

Its subcellular location is the plastid. The protein localises to the chloroplast stroma. It catalyses the reaction 2 oxidized [2Fe-2S]-[ferredoxin] + 2 L-glutamate = L-glutamine + 2 reduced [2Fe-2S]-[ferredoxin] + 2-oxoglutarate + 2 H(+). The protein operates within amino-acid biosynthesis; L-glutamate biosynthesis via GLT pathway; L-glutamate from 2-oxoglutarate and L-glutamine (ferredoxin route): step 1/1. Its pathway is energy metabolism; nitrogen metabolism. In terms of biological role, may play a role in primary nitrogen assimilation in roots. Could supply a constitutive level of glutamate to maintain a basal level of protein synthesis. The sequence is that of Ferredoxin-dependent glutamate synthase 2, chloroplastic (GLU2) from Arabidopsis thaliana (Mouse-ear cress).